The primary structure comprises 933 residues: DNA repair-scaffolding protein (933 aa).

Disordered stretches follow at residues 1–34 (MSGARRPGTSKRKRNWHIEHPSFREERSQQLRRG), 67–174 (SEKT…KGTL), and 205–224 (YSSDSEKEEDPEHSLFIDSE). Basic and acidic residues-rich tracts occupy residues 16-29 (WHIEHPSFREERSQ), 71-87 (GITEKHLELSPKPKTET), and 119-132 (RDGRHGPRADRLGD). Residues 138-148 (PEDEDIEDELQ) show a composition bias toward acidic residues. The necessary for interaction with RAD51 stretch occupies residues 175-469 (DISDCDSCAS…GTGWTHGHEK (295 aa)). The segment covering 214-224 (DPEHSLFIDSE) has biased composition (basic and acidic residues).

As to quaternary structure, found in a complex, at least composed of BLM, RAD51 and SPIDR; the complex formation is mediated by SPIDR. Interacts (via C-terminal region) with BLM; the interaction is direct. Interacts with RAD51; the interaction is direct. Interacts (via the C-terminal region) with FIGNL1 (via N-terminal one-half region); the interaction is direct.

It is found in the nucleus. In terms of biological role, plays a role in DNA double-strand break (DBS) repair via homologous recombination (HR). Serves as a scaffolding protein that helps to promote the recruitment of DNA-processing enzymes like the helicase BLM and recombinase RAD51 to site of DNA damage, and hence contributes to maintain genomic integrity. The chain is DNA repair-scaffolding protein (Spidr) from Mus musculus (Mouse).